Here is a 242-residue protein sequence, read N- to C-terminus: Biosynthetic peptidoglycan transglycosylase (242 aa).

The chain crosses the membrane as a helical span at residues 19–39 (LLLACAVLWGGGVALFSIVPV).

This sequence belongs to the glycosyltransferase 51 family.

It is found in the cell inner membrane. It carries out the reaction [GlcNAc-(1-&gt;4)-Mur2Ac(oyl-L-Ala-gamma-D-Glu-L-Lys-D-Ala-D-Ala)](n)-di-trans,octa-cis-undecaprenyl diphosphate + beta-D-GlcNAc-(1-&gt;4)-Mur2Ac(oyl-L-Ala-gamma-D-Glu-L-Lys-D-Ala-D-Ala)-di-trans,octa-cis-undecaprenyl diphosphate = [GlcNAc-(1-&gt;4)-Mur2Ac(oyl-L-Ala-gamma-D-Glu-L-Lys-D-Ala-D-Ala)](n+1)-di-trans,octa-cis-undecaprenyl diphosphate + di-trans,octa-cis-undecaprenyl diphosphate + H(+). It functions in the pathway cell wall biogenesis; peptidoglycan biosynthesis. Its function is as follows. Peptidoglycan polymerase that catalyzes glycan chain elongation from lipid-linked precursors. This Klebsiella oxytoca protein is Biosynthetic peptidoglycan transglycosylase.